A 75-amino-acid chain; its full sequence is Sec-independent protein translocase protein TatA (75 aa).

The chain crosses the membrane as a helical span at residues 1–21 (MGSMSIWHWIVVLAVVLLLFG). The interval 43-75 (MAEDDDAPAKPAEPPRAVPHQATPAPESEKKAV) is disordered.

It belongs to the TatA/E family. The Tat system comprises two distinct complexes: a TatABC complex, containing multiple copies of TatA, TatB and TatC subunits, and a separate TatA complex, containing only TatA subunits. Substrates initially bind to the TatABC complex, which probably triggers association of the separate TatA complex to form the active translocon.

The protein localises to the cell inner membrane. Functionally, part of the twin-arginine translocation (Tat) system that transports large folded proteins containing a characteristic twin-arginine motif in their signal peptide across membranes. TatA could form the protein-conducting channel of the Tat system. This is Sec-independent protein translocase protein TatA from Azorhizobium caulinodans (strain ATCC 43989 / DSM 5975 / JCM 20966 / LMG 6465 / NBRC 14845 / NCIMB 13405 / ORS 571).